A 501-amino-acid chain; its full sequence is MSNAEQQAPVQQDENQLIAERRAKLAEWRKTGKAFPNDFQRENTAAKVLEGYGEKTAEELEGLPIEVKVAGRLMLKRVMGKASFATIQDLSGRIQIYITRDRVGEEVYADFKTWDLGDIIGVTGSLMKTKTGELSIQAAEIRLLTKSLRPLPDKFHGLADQEMKYRQRYVDLIMNEETRFTFRARSAIVASIRNYMTGHGFMEVETPMMHPIPGGASAKPFVTHHNALDMQQFLRIAPELYLKRLVVGGFEKVFEINRNFRNEGLSPRHNPEFTMMEFYEAYANYHTLMDFTEGLLRHAAREALGKEVFVYQGRELDLSKPFHRLTINQAIQRQHPEFSDAELADPEFLKAKIKHFGEPLKPGGLGSLQLQLFEACAEAHCWEPTFIIDYPVEVSPLARASDTNPEITERFELFIVGREIANGFSELNDAEDQAARFQEQMKAKDAGDEEAMYYDADFIRALEYGLPPTGGCGIGIDRLIMLLTDAAAIRDVILFPSMRPE.

E412 and E419 together coordinate Mg(2+).

Belongs to the class-II aminoacyl-tRNA synthetase family. Homodimer. Mg(2+) serves as cofactor.

Its subcellular location is the cytoplasm. It carries out the reaction tRNA(Lys) + L-lysine + ATP = L-lysyl-tRNA(Lys) + AMP + diphosphate. The sequence is that of Lysine--tRNA ligase from Dechloromonas aromatica (strain RCB).